The following is a 967-amino-acid chain: Aminopeptidase N (967 aa).

Residues Met-1 to Ser-8 lie on the Cytoplasmic side of the membrane. A helical; Signal-anchor for type II membrane protein transmembrane segment spans residues Lys-9 to Val-32. The cytosolic Ser/Thr-rich junction stretch occupies residues Tyr-33–Ser-66. The Extracellular segment spans residues Tyr-33–Ser-967. Asn-38 carries an N-linked (GlcNAc...) asparagine glycan. The interval Thr-41 to Thr-61 is disordered. Residues Lys-67–Ser-967 are metalloprotease. N-linked (GlcNAc...) asparagine glycosylation is found at Asn-84 and Asn-126. Sulfotyrosine is present on Tyr-175. Residues Asn-233 and Asn-338 are each glycosylated (N-linked (GlcNAc...) asparagine). Gly-351–Asn-355 is a binding site for substrate. His-387 provides a ligand contact to Zn(2+). Glu-388 serves as the catalytic Proton acceptor. Residues His-391 and Glu-410 each coordinate Zn(2+). The residue at position 418 (Tyr-418) is a Sulfotyrosine. Residues Asn-626, Asn-682, and Asn-740 are each glycosylated (N-linked (GlcNAc...) asparagine). Residues Ala-670–Trp-840 are interaction with FCoV and TGEV spike glycoprotein. Cystine bridges form between Cys-762–Cys-769 and Cys-799–Cys-835.

It belongs to the peptidase M1 family. As to quaternary structure, homodimer. Interacts with SLC6A19. (Microbial infection) Interacts with FCoV, CCoV, TGEV and HCoV-229E spike glycoprotein. Requires Zn(2+) as cofactor. Sulfated. Post-translationally, N- and O-glycosylated. In terms of processing, may undergo proteolysis and give rise to a soluble form.

The protein localises to the cell membrane. It carries out the reaction Release of an N-terminal amino acid, Xaa-|-Yaa- from a peptide, amide or arylamide. Xaa is preferably Ala, but may be most amino acids including Pro (slow action). When a terminal hydrophobic residue is followed by a prolyl residue, the two may be released as an intact Xaa-Pro dipeptide.. Broad specificity aminopeptidase which plays a role in the final digestion of peptides generated from hydrolysis of proteins by gastric and pancreatic proteases. Also involved in the processing of various peptides including peptide hormones, such as angiotensin III and IV, neuropeptides, and chemokines. May also be involved the cleavage of peptides bound to major histocompatibility complex class II molecules of antigen presenting cells. May have a role in angiogenesis and promote cholesterol crystallization. May have a role in amino acid transport by acting as binding partner of amino acid transporter SLC6A19 and regulating its activity. Functionally, (Microbial infection) In case of feline coronavirus (FCoV) infection, serves as a receptor for FCoV spike glycoprotein. It is as well a receptor for other serogroup I coronaviruses, like canine coronavirus (CCoV), porcine transmissible gastroenteritis virus (TGEV), and human coronavirus 229E (HCoV-229E). Also serves as a receptor for infectious bronchitis virus (IBV, Arkansas 99 serotype) in serogroup III. The sequence is that of Aminopeptidase N (ANPEP) from Felis catus (Cat).